The following is a 132-amino-acid chain: Ribonuclease P protein component (132 aa).

This sequence belongs to the RnpA family. As to quaternary structure, consists of a catalytic RNA component (M1 or rnpB) and a protein subunit.

It carries out the reaction Endonucleolytic cleavage of RNA, removing 5'-extranucleotides from tRNA precursor.. In terms of biological role, RNaseP catalyzes the removal of the 5'-leader sequence from pre-tRNA to produce the mature 5'-terminus. It can also cleave other RNA substrates such as 4.5S RNA. The protein component plays an auxiliary but essential role in vivo by binding to the 5'-leader sequence and broadening the substrate specificity of the ribozyme. This Micrococcus luteus (strain ATCC 4698 / DSM 20030 / JCM 1464 / CCM 169 / CCUG 5858 / IAM 1056 / NBRC 3333 / NCIMB 9278 / NCTC 2665 / VKM Ac-2230) (Micrococcus lysodeikticus) protein is Ribonuclease P protein component.